Here is a 38-residue protein sequence, read N- to C-terminus: Kappa-actitoxin-Bcs3a (38 aa).

The region spanning Cys2–Cys37 is the ShKT domain. Disulfide bonds link Cys2–Cys37, Cys11–Cys30, and Cys20–Cys34. Residues Lys25–Tyr26 form a crucial for binding to potassium channels region.

It belongs to the sea anemone type 1 potassium channel toxin family. Type 1b subfamily.

The protein resides in the secreted. It localises to the nematocyst. In terms of biological role, inhibits voltage-gated potassium channels (IC(50)=405.0 nM for rKCNA1/Kv1.1, IC(50)=0.03 nM for rKCNA2/Kv1.2, IC(50)=1.31 nM for rKCNA6/Kv1.6, IC(50)=74.11 nM for hKCNA3/Kv1.3, and IC(50)=247.69 nM for insect Shaker IR). Binds the Shaker IR channels in a voltage-independent manner. The sequence is that of Kappa-actitoxin-Bcs3a from Bunodosoma caissarum (Sea anemone).